The sequence spans 626 residues: Chaperone protein HtpG (626 aa).

Positions 1–343 (MHKQTLSFQA…SADLPLNVSR (343 aa)) are a; substrate-binding. Residues 344 to 558 (ELLQESRAVK…DGDMSTQLAR (215 aa)) are b. Residues 559-626 (MLKQAGQAVP…YVKRVNALLV (68 aa)) form a c region.

This sequence belongs to the heat shock protein 90 family. As to quaternary structure, homodimer.

Its subcellular location is the cytoplasm. In terms of biological role, molecular chaperone. Has ATPase activity. The polypeptide is Chaperone protein HtpG (Polaromonas sp. (strain JS666 / ATCC BAA-500)).